The sequence spans 100 residues: uncharacterized protein (100 aa).

The disordered stretch occupies residues 1-86 (MRGTRRGPSG…RHRPPEVTEP (86 aa)). Over residues 35-48 (DTPPPRAPPPPPPL) the composition is skewed to pro residues.

This is an uncharacterized protein from Human herpesvirus 6A (strain Uganda-1102) (HHV-6 variant A).